Consider the following 563-residue polypeptide: Efflux pump notK (563 aa).

The tract at residues 1-32 (MTKDEDSGTTDGGYSTPDIAVQEKQDQPPAPE) is disordered. Transmembrane regions (helical) follow at residues 48 to 68 (IFLSTLLAALDIGIVATAIPG), 78 to 98 (DVGWYGGACFLLVGSSAPMWG), 108 to 128 (LVYLVSVVIFLVGSIVAAAAP), 138 to 158 (ALQGWGCSGTLGGSVLMISYV), 165 to 185 (AMLIGMWMSVFMFSTIIGPLL), 197 to 217 (WCFWINLPVGGPVIALVVLFF), 239 to 259 (LPGFALLLTSLVCLTVALQWG), 270 to 290 (VIATLVMWVVLTIAFFVVEWI), 312 to 332 (LYGWIANLANFQVLFYLPIYF), 345 to 365 (VNSLPFMAFFAAGSMLSGFLI), 374 to 394 (YEFASGVLATVGAALLYTLDI), 406 to 426 (VIFGIGIGLGNQVPMTALESF), 438 to 458 (VMLMCNSISGAYFVTAAQSIF), and 509 to 529 (VFAFSLAGAAFTVVLSLAIPF). The segment at 538–563 (GPSNGQEEEEGKKDGPAEKKEDEVAV) is disordered. Residues 547 to 563 (EGKKDGPAEKKEDEVAV) are compositionally biased toward basic and acidic residues.

It belongs to the major facilitator superfamily. TCR/Tet family.

The protein localises to the cell membrane. Efflux pump; part of the gene cluster that mediates the biosynthesis of notoamide, a fungal indole alkaloid that belongs to a family of natural products containing a characteristic bicyclo[2.2.2]diazaoctane core. The polypeptide is Efflux pump notK (Aspergillus sp. (strain MF297-2)).